The sequence spans 426 residues: Amino acid transporter AVT1H (426 aa).

Helical transmembrane passes span 34–54 (SFLH…QLSM), 55–75 (PYAV…FGIL), 110–130 (LIVC…YTIS), 148–168 (HFPA…SLWI), 182–202 (ILMS…GGVI), 215–235 (IPTV…FPNL), 248–268 (VSIV…ITGA), 292–312 (IALW…FAPL), 340–360 (LLLV…VLSL), 363–383 (SLVS…KICW), and 392–412 (AANL…SFES).

Belongs to the amino acid/polyamine transporter 2 family. Amino acid/auxin permease (AAAP) (TC 2.A.18.5) subfamily.

It localises to the membrane. In Arabidopsis thaliana (Mouse-ear cress), this protein is Amino acid transporter AVT1H.